We begin with the raw amino-acid sequence, 187 residues long: Phosphoheptose isomerase (187 aa).

The 154-residue stretch at 34-187 (CIEALKNQKK…ILCSLIDESF (154 aa)) folds into the SIS domain. A substrate-binding site is contributed by 49-51 (NGG). Zn(2+) contacts are provided by His-58 and Glu-62. Residues Glu-62, 91–92 (ND), 117–119 (STS), Ser-122, and Gln-169 contribute to the substrate site. Residues Gln-169 and His-177 each coordinate Zn(2+).

It belongs to the SIS family. GmhA subfamily. Homotetramer. It depends on Zn(2+) as a cofactor.

The protein resides in the cytoplasm. The catalysed reaction is 2 D-sedoheptulose 7-phosphate = D-glycero-alpha-D-manno-heptose 7-phosphate + D-glycero-beta-D-manno-heptose 7-phosphate. The protein operates within carbohydrate biosynthesis; D-glycero-D-manno-heptose 7-phosphate biosynthesis; D-glycero-alpha-D-manno-heptose 7-phosphate and D-glycero-beta-D-manno-heptose 7-phosphate from sedoheptulose 7-phosphate: step 1/1. Functionally, catalyzes the isomerization of sedoheptulose 7-phosphate in D-glycero-D-manno-heptose 7-phosphate. The chain is Phosphoheptose isomerase from Nitratiruptor sp. (strain SB155-2).